Reading from the N-terminus, the 432-residue chain is Enolase (432 aa).

Glutamine 168 serves as a coordination point for (2R)-2-phosphoglycerate. Glutamate 210 (proton donor) is an active-site residue. Aspartate 247, glutamate 288, and aspartate 315 together coordinate Mg(2+). Residues lysine 340, arginine 369, serine 370, and lysine 391 each contribute to the (2R)-2-phosphoglycerate site. Lysine 340 acts as the Proton acceptor in catalysis.

This sequence belongs to the enolase family. It depends on Mg(2+) as a cofactor.

The protein localises to the cytoplasm. It is found in the secreted. Its subcellular location is the cell surface. It catalyses the reaction (2R)-2-phosphoglycerate = phosphoenolpyruvate + H2O. It participates in carbohydrate degradation; glycolysis; pyruvate from D-glyceraldehyde 3-phosphate: step 4/5. Its function is as follows. Catalyzes the reversible conversion of 2-phosphoglycerate (2-PG) into phosphoenolpyruvate (PEP). It is essential for the degradation of carbohydrates via glycolysis. This Microcystis aeruginosa (strain NIES-843 / IAM M-2473) protein is Enolase.